Consider the following 741-residue polypeptide: Methionine--tRNA ligase (741 aa).

The segment covering 1-22 (MTMKQYTMSKMNAETQTQTRES) has biased composition (polar residues). The segment at 1–25 (MTMKQYTMSKMNAETQTQTRESFPT) is disordered. Positions 36–46 (PYANGDLHIGH) match the 'HIGH' region motif. Zn(2+) is bound by residues Cys-167, Cys-170, Cys-179, and Cys-183. The interval 309-329 (VRSHSSSSAKDSSEGNSPSNI) is disordered. Over residues 311-329 (SHSSSSAKDSSEGNSPSNI) the composition is skewed to low complexity. Thr-381 is a binding site for ATP. Positions 591-629 (KLADRVTDPTDDDDSDTDTETGTDVAETTNESHSESNMT) are disordered. Residues 599–611 (PTDDDDSDTDTET) show a composition bias toward acidic residues. Residues 616–629 (AETTNESHSESNMT) are compositionally biased toward polar residues. The tRNA-binding domain maps to 643-741 (EFEELDLRVA…EDADPGTSIQ (99 aa)).

Belongs to the class-I aminoacyl-tRNA synthetase family. MetG type 1 subfamily. In terms of assembly, homodimer. The cofactor is Zn(2+).

The protein resides in the cytoplasm. The catalysed reaction is tRNA(Met) + L-methionine + ATP = L-methionyl-tRNA(Met) + AMP + diphosphate. Is required not only for elongation of protein synthesis but also for the initiation of all mRNA translation through initiator tRNA(fMet) aminoacylation. The chain is Methionine--tRNA ligase from Haloquadratum walsbyi (strain DSM 16790 / HBSQ001).